We begin with the raw amino-acid sequence, 269 residues long: Regulatory protein RecX (269 aa).

It belongs to the RecX family.

The protein localises to the cytoplasm. Modulates RecA activity. The protein is Regulatory protein RecX of Lactococcus lactis subsp. cremoris (strain SK11).